We begin with the raw amino-acid sequence, 626 residues long: Acetolactate synthase large subunit (626 aa).

Residues 1 to 13 (MNVAASQQPTPAT) show a composition bias toward polar residues. Residues 1–23 (MNVAASQQPTPATVASRGRSAAP) form a disordered region. Residue E73 coordinates thiamine diphosphate. FAD is bound by residues R175, 281-302 (HGTV…IGSR), and 324-343 (DIDP…IVGD). The segment at 416-496 (QHQMWAAQFV…IKIALINNGN (81 aa)) is thiamine pyrophosphate binding. The Mg(2+) site is built by D467 and N494.

It belongs to the TPP enzyme family. As to quaternary structure, dimer of large and small chains. The cofactor is Mg(2+). Thiamine diphosphate serves as cofactor.

It catalyses the reaction 2 pyruvate + H(+) = (2S)-2-acetolactate + CO2. It participates in amino-acid biosynthesis; L-isoleucine biosynthesis; L-isoleucine from 2-oxobutanoate: step 1/4. It functions in the pathway amino-acid biosynthesis; L-valine biosynthesis; L-valine from pyruvate: step 1/4. In Corynebacterium glutamicum (strain ATCC 13032 / DSM 20300 / JCM 1318 / BCRC 11384 / CCUG 27702 / LMG 3730 / NBRC 12168 / NCIMB 10025 / NRRL B-2784 / 534), this protein is Acetolactate synthase large subunit (ilvB).